A 294-amino-acid chain; its full sequence is Probable 2-(5''-triphosphoribosyl)-3'-dephosphocoenzyme-A synthase (294 aa).

It belongs to the CitG/MdcB family.

The catalysed reaction is 3'-dephospho-CoA + ATP = 2'-(5''-triphospho-alpha-D-ribosyl)-3'-dephospho-CoA + adenine. The protein is Probable 2-(5''-triphosphoribosyl)-3'-dephosphocoenzyme-A synthase of Streptococcus equi subsp. equi (strain 4047).